We begin with the raw amino-acid sequence, 464 residues long: Centrosomal protein of 55 kDa (464 aa).

Positions 1 to 11 are enriched in basic and acidic residues; it reads MSSRSTKDLIK. The tract at residues 1–26 is disordered; the sequence is MSSRSTKDLIKSKWGSKPSNSKSETT. Coiled-coil stretches lie at residues 22-186, 238-337, and 374-403; these read KSET…QWLV, NDLL…FLYT, and QHQL…LHEF. Ser96 is modified (phosphoserine). The interaction with TSG101 stretch occupies residues 157–236; it reads PNCFNSSINN…GYLQEEKQKC (80 aa). An interaction with PDCD6IP region spans residues 160-214; the sequence is FNSSINNIHEMEIQLKDALEKNQQWLVYDQQREVYVKGLLAKIFELEKKTETAAH. Residues 355 to 464 form a required for localization to the interphase centrosome and to the midbody during cytokinesis region; it reads QMQACTLDFE…LLVHVEYCSK (110 aa). Phosphoserine; by CDK1 and MAPK1 occurs at positions 425 and 428. Residue Thr430 is modified to Phosphothreonine. A Phosphoserine; by PLK1 modification is found at Ser436.

Homodimer. Interacts (phosphorylated on Ser-425 and Ser-428) with PLK1; the interaction is indirect via the MTMR3:MTMR4 heterooligomer, occurs during early mitosis, regulates the phosphorylation of CEP55 by PLK1 and its recruitment to the midbody where it can mediate cell abscission. Interacts with AKAP9/CG-NAP; the interaction occurs in interphase and is lost upon mitotic entry. Interacts with PCNT/Kendrin; the interaction occurs in interphase and is lost upon mitotic entry. Directly interacts with PDCD6IP; this interaction is required for PDCD6IP targeting to the midbody; CEP55 binds PDCD6IP in a 2:1 stoichiometry; PDCD6IP competes with TSG101 for the same binding site. Interacts with TSG101; TSG101 competes with PDCD6IP for the same binding site; interaction is required for cytokinesis but not for viral budding. Interacts with MVB12A, VPS37B, VPS37C and VPS28. In terms of processing, there is a hierachy of phosphorylation, where both Ser-425 and Ser-428 are phosphorylated at the onset of mitosis, prior to Ser-436. Phosphorylation at Ser-425 and Ser-428 is required for dissociation from the centrosome at the G2/M boundary. Phosphorylation at the 3 sites, Ser-425, Ser-428 and Ser-436, is required for protein function at the final stages of cell division to complete cytokinesis successfully. As to expression, expressed in embryonic brain. Expressed in fetal brain ganglionic eminence, kidney tubules and multinucleate neurons in the temporal cortex. Expressed in adult brain, cerebellum, kidney tubules, intestine and muscles (at protein level). Widely expressed, mostly in proliferative tissues. Highly expressed in testis. Intermediate levels in adult and fetal thymus, as well as in various cancer cell lines. Low levels in different parts of the digestive tract, bone marrow, lymph nodes, placenta, fetal heart and fetal spleen. Hardly detected in brain.

Its subcellular location is the cytoplasm. It localises to the cytoskeleton. The protein resides in the microtubule organizing center. It is found in the centrosome. The protein localises to the centriole. Its subcellular location is the cleavage furrow. It localises to the midbody. The protein resides in the midbody ring. In terms of biological role, plays a role in mitotic exit and cytokinesis. Recruits PDCD6IP and TSG101 to midbody during cytokinesis. Required for successful completion of cytokinesis. Not required for microtubule nucleation. Plays a role in the development of the brain and kidney. This Homo sapiens (Human) protein is Centrosomal protein of 55 kDa.